The primary structure comprises 280 residues: Energy-coupling factor transporter ATP-binding protein EcfA1 (280 aa).

Positions 6–241 (LRIENISFQY…SHMLQEIGLD (236 aa)) constitute an ABC transporter domain. 40-47 (GQNGSGKS) provides a ligand contact to ATP.

The protein belongs to the ABC transporter superfamily. Energy-coupling factor EcfA family. In terms of assembly, forms a stable energy-coupling factor (ECF) transporter complex composed of 2 membrane-embedded substrate-binding proteins (S component), 2 ATP-binding proteins (A component) and 2 transmembrane proteins (T component).

The protein localises to the cell membrane. Its function is as follows. ATP-binding (A) component of a common energy-coupling factor (ECF) ABC-transporter complex. Unlike classic ABC transporters this ECF transporter provides the energy necessary to transport a number of different substrates. This chain is Energy-coupling factor transporter ATP-binding protein EcfA1, found in Bacillus cereus (strain ATCC 14579 / DSM 31 / CCUG 7414 / JCM 2152 / NBRC 15305 / NCIMB 9373 / NCTC 2599 / NRRL B-3711).